Reading from the N-terminus, the 365-residue chain is Flavone synthase (365 aa).

Histidine 76, histidine 218, aspartate 220, and histidine 276 together coordinate Fe cation. In terms of domain architecture, Fe2OG dioxygenase spans 194-295; it reads MEQKVLINYY…RLSIATFQNP (102 aa). Positions 345-365 are disordered; that stretch reads RLQDEKAKLEMKSKSADENLA.

This sequence belongs to the iron/ascorbate-dependent oxidoreductase family. The cofactor is Fe cation. L-ascorbate serves as cofactor.

The protein localises to the cytoplasm. It carries out the reaction a flavanone + 2-oxoglutarate + O2 = a flavone + succinate + CO2 + H2O. It functions in the pathway secondary metabolite biosynthesis; flavonoid biosynthesis. Functionally, involved in the conversion of naringenin to apigenin. Acts via a direct 2,3-desaturation of flavanones instead of a sequential hydroxylation/dehydratation mechanism. This chain is Flavone synthase (FNSI), found in Petroselinum crispum (Parsley).